A 268-amino-acid polypeptide reads, in one-letter code: MLPSIAKHAASHQIHPLKKHGQNFIFDGSLCDKIVRASGLEENSNVLEIGPGTGGLTRSILHKNPKLLTVIETDERCIPLLNEIKQYHPNLNIIKQDALKLKLSDLNTNKITIISNLPYHIGTELVIRWLKESSLVASMTLMLQKEVVERICAKPSTKAYGRLSVICSLIATVEKCFDVAPTAFYPPPKVYSAIVKLTPLENIPNSDLISKVELITKMAFAGRRKMIKSSLKNLAPNISELLAKLNISNNCRAENLTPNDYLSLASLI.

Residues N23, I25, G50, E72, D97, and N116 each coordinate S-adenosyl-L-methionine.

Belongs to the class I-like SAM-binding methyltransferase superfamily. rRNA adenine N(6)-methyltransferase family. RsmA subfamily.

The protein resides in the cytoplasm. The catalysed reaction is adenosine(1518)/adenosine(1519) in 16S rRNA + 4 S-adenosyl-L-methionine = N(6)-dimethyladenosine(1518)/N(6)-dimethyladenosine(1519) in 16S rRNA + 4 S-adenosyl-L-homocysteine + 4 H(+). Functionally, specifically dimethylates two adjacent adenosines (A1518 and A1519) in the loop of a conserved hairpin near the 3'-end of 16S rRNA in the 30S particle. May play a critical role in biogenesis of 30S subunits. This chain is Ribosomal RNA small subunit methyltransferase A, found in Rickettsia bellii (strain OSU 85-389).